The primary structure comprises 715 residues: Myosin light chain kinase 3 (715 aa).

Residues Val-67–Pro-114 form a disordered region. The Protein kinase domain maps to Val-404 to Leu-659. Residues Leu-410–Val-418 and Lys-433 each bind ATP. The active-site Proton acceptor is Asp-525.

The protein belongs to the protein kinase superfamily. CAMK Ser/Thr protein kinase family. Requires Mg(2+) as cofactor. In terms of processing, phosphorylated on serine residues.

It localises to the cytoplasm. The catalysed reaction is L-seryl-[myosin light chain] + ATP = O-phospho-L-seryl-[myosin light chain] + ADP + H(+). It carries out the reaction L-threonyl-[myosin light chain] + ATP = O-phospho-L-threonyl-[myosin light chain] + ADP + H(+). Functionally, kinase that phosphorylates MYL2 in vitro. Increases cardiomyocyte contractility. Required for sarcomere formation in the developing heart. This chain is Myosin light chain kinase 3 (mylk3), found in Danio rerio (Zebrafish).